A 168-amino-acid polypeptide reads, in one-letter code: Protein OPG162 (168 aa).

Topologically, residues 1–14 (MKSLNRQTVSMFKK) are intravirion. A helical membrane pass occupies residues 15–37 (LSVPAAIMMILSTIISGIGTFLH). Residues 38 to 168 (YKEELMPSAC…SVLCVKKFYK (131 aa)) are Virion surface-facing. Residues 54–163 (YDKHCYLDTN…CKSTQSVLCV (110 aa)) form the C-type lectin domain. 2 disulfides stabilise this stretch: Cys75–Cys162 and Cys141–Cys154. Residue Asn133 is glycosylated (N-linked (GlcNAc...) asparagine; by host).

This sequence belongs to the orthopoxvirus OPG162 protein family. As to quaternary structure, interacts with protein OPG161. Interacts with protein OPG164. Interacts with protein OPG190.

It is found in the virion membrane. The protein resides in the host Golgi apparatus. Forms a complex with OPG162 and OPG190 to coordinate the incorporation of OPG164 into wrapped enveloped virion (EV) membranes and, subsequently, the production of actin tails. Therefore plays an essential role in efficient cell-to-cell spread of viral particles. In Homo sapiens (Human), this protein is Protein OPG162 (OPG162).